The sequence spans 763 residues: Translation initiation factor IF-2, chloroplastic (763 aa).

Disordered regions lie at residues 1–22 (MFLN…NNSS), 52–122 (IDKS…SNSA), and 149–168 (NNKI…DQSI). Low complexity predominate over residues 13-22 (SSYSTNNNSS). Basic and acidic residues predominate over residues 73 to 92 (RIDKKNKNFNKAHDLLDNKK). Over residues 93-104 (NKNRQRKKIKNK) the composition is skewed to basic residues. Polar residues predominate over residues 151–168 (KIPQQKKQQVASSIDQSI). The tr-type G domain maps to 261–429 (NRPPVVTILG…ILLLAELENL (169 aa)). Residues 270–277 (GHVDHGKT), 316–320 (DTPGH), and 370–373 (SKID) contribute to the GTP site.

Belongs to the TRAFAC class translation factor GTPase superfamily. Classic translation factor GTPase family. IF-2 subfamily.

The protein resides in the plastid. It is found in the chloroplast. In terms of biological role, one of the essential components for the initiation of protein synthesis. Protects formylmethionyl-tRNA from spontaneous hydrolysis and promotes its binding to the 30S ribosomal subunits. Also involved in the hydrolysis of GTP during the formation of the 70S ribosomal complex. In Porphyra purpurea (Red seaweed), this protein is Translation initiation factor IF-2, chloroplastic (infB).